The chain runs to 270 residues: MSLAVFSPCDVASKLLSEVVGEKYPKVDDDDSIVEPVTSLCLPQLSYEDFHHFSVIPLWNKTFPCRLATEWNPKNKKDAPPKKKNALVILERVASRSNQNAVSRVINILRSKVHLMFSSSNELPSSEDVERWKKSPETLAASEYGCNLFIQFLKEQTSENEVDFWLDCQKFRSSKMSSRQNEARRIFDEYFAMGSPKKIYIERYLWCVVQAYLVNDPGWRHTFDVAQAYVGLKLAKKSHKKFLEDPLYLDLVELVTSGVNYNKFWHDKLE.

In terms of domain architecture, RGS spans 135–252 (SPETLAASEY…LEDPLYLDLV (118 aa)).

In terms of biological role, shown to have a role in viability and embryogenesis. This chain is Regulator of G-protein signaling rgs-10 (rgs-10), found in Caenorhabditis elegans.